A 487-amino-acid chain; its full sequence is Melanopsin (487 aa).

The interval 1–37 (MNPPSGPRTQEPSCVATPASPSRWDGYRSSTSSLDQP) is disordered. At 1-67 (MNPPSGPRTQ…VDVPDHAHYT (67 aa)) the chain is on the extracellular side. The chain crosses the membrane as a helical span at residues 68–88 (LGTVILLVGLTGILGNLMVIY). The Cytoplasmic segment spans residues 89-102 (TFCRSRGLRTPANM). A helical membrane pass occupies residues 103 to 123 (FIINLAVSDFFMSFTQAPVFF). Residues 124–139 (ASSLHKRWLFGEAGCE) lie on the Extracellular side of the membrane. A disulfide bond links cysteine 138 and cysteine 216. The chain crosses the membrane as a helical span at residues 140–160 (FYAFCGALFGITSMITLMAIA). Residues 161-183 (LDRYLVITHPLATIGVVSKRRAA) lie on the Cytoplasmic side of the membrane. Residues 184–204 (LVLLGVWLYALAWSLPPFFGW) traverse the membrane as a helical segment. Over 205 to 233 (SAYVPEGLLTSCSWDYMSFTPSVRAYTML) the chain is Extracellular. Residues 234–254 (LFCFVFFLPLLVIVYCYIFIF) traverse the membrane as a helical segment. Residues 255-291 (RAIRETGQALQTFRACEGGGRSPRQRQRLQREWKMAK) are Cytoplasmic-facing. A helical transmembrane segment spans residues 292 to 312 (IELLVILLFVLSWAPYSIVAL). At 313 to 327 (MAFAGYAHVLTPYMN) the chain is on the extracellular side. Residues 328–348 (SVPAVIAKASAIHNPIIYAIT) form a helical membrane-spanning segment. Lysine 335 carries the post-translational modification N6-(retinylidene)lysine. The Cytoplasmic segment spans residues 349 to 487 (HPKYRMAIAQ…LPLHPGWAFH (139 aa)). The tract at residues 436–459 (CSQGLEDREAKAPVRPQGREAETP) is disordered. A compositionally biased stretch (basic and acidic residues) spans 440 to 457 (LEDREAKAPVRPQGREAE).

It belongs to the G-protein coupled receptor 1 family. Opsin subfamily. As to expression, eye. Expression is restricted within the ganglion cell layer.

It localises to the cell membrane. It is found in the cell projection. The protein resides in the axon. The protein localises to the dendrite. Its subcellular location is the perikaryon. Its function is as follows. Photoreceptor that binds cis-retinaldehydes. Contributes to pupillar reflex, photoentrainment and other non-image forming responses to light. May be involved in the optokinetic visual tracking response. May be involved in the regulation of retinal hyaloid vessel growth and regression. In Felis catus (Cat), this protein is Melanopsin (OPN4).